Reading from the N-terminus, the 368-residue chain is Xaa-Pro dipeptidase (368 aa).

Mn(2+) contacts are provided by D223, D234, H298, E327, and E341.

The protein belongs to the peptidase M24B family. Requires Mn(2+) as cofactor.

The protein resides in the cytoplasm. The catalysed reaction is Xaa-L-Pro dipeptide + H2O = an L-alpha-amino acid + L-proline. This chain is Xaa-Pro dipeptidase (pepQ), found in Lactobacillus delbrueckii subsp. lactis.